We begin with the raw amino-acid sequence, 942 residues long: DDB1- and CUL4-associated factor 5 (942 aa).

6 WD repeats span residues 51 to 91, 99 to 139, 140 to 180, 185 to 225, 277 to 317, and 331 to 370; these read GHFG…HSRV, EHHS…LDVF, AHED…HGEP, NYPS…SSLL, FNSC…EAGG, and GHRS…GCTG. Disordered regions lie at residues 449–478 and 490–509; these read GVSE…ESAD and TTNT…AASR. Polar residues predominate over residues 454 to 465; that stretch reads SGYTDSESSASL. Phosphothreonine is present on threonine 500. Residues serine 531, serine 533, serine 626, serine 628, serine 645, serine 648, and serine 651 each carry the phosphoserine modification. Disordered regions lie at residues 544–655, 676–824, and 889–942; these read TDLF…DIES, NNKD…EERS, and ACET…KLKT. The span at 625 to 641 shows a compositional bias: low complexity; it reads LSSSPTSSPERSTSTLE. Composition is skewed to basic and acidic residues over residues 690–701 and 728–738; these read DEGRAGTSHKDN and CSKDTFKEETP. Positions 760 to 770 are enriched in polar residues; that stretch reads GTSQDTGNSGS. At serine 794 the chain carries Phosphoserine. Positions 801–815 are enriched in polar residues; the sequence is SGSTLNSGSGNCPRT.

As to quaternary structure, interacts with DDB1, CUL4A or CUL4B. Interacts with L3MBTL3. Interacts with DNMT1. Interacts with E2F1. Interacts with SOX2. As to expression, ubiquitous.

It participates in protein modification; protein ubiquitination. Its function is as follows. Is a substrate receptor for the CUL4-DDB1 E3 ubiquitin-protein ligase complex (CRL4). The complex CRL4-DCAF5 is involved in the ubiquitination of a set of methylated non-histone proteins, including SOX2, DNMT1 and E2F1. The protein is DDB1- and CUL4-associated factor 5 (DCAF5) of Homo sapiens (Human).